A 337-amino-acid chain; its full sequence is Anthranilate phosphoribosyltransferase (337 aa).

Residues G82, 85 to 86 (GD), T90, 92 to 95 (NIST), 110 to 118 (KHGGRSVSS), and S122 contribute to the 5-phospho-alpha-D-ribose 1-diphosphate site. G82 serves as a coordination point for anthranilate. S94 lines the Mg(2+) pocket. An anthranilate-binding site is contributed by R168. Residues D226 and E227 each coordinate Mg(2+).

Belongs to the anthranilate phosphoribosyltransferase family. Homodimer. Mg(2+) is required as a cofactor.

The catalysed reaction is N-(5-phospho-beta-D-ribosyl)anthranilate + diphosphate = 5-phospho-alpha-D-ribose 1-diphosphate + anthranilate. It participates in amino-acid biosynthesis; L-tryptophan biosynthesis; L-tryptophan from chorismate: step 2/5. Catalyzes the transfer of the phosphoribosyl group of 5-phosphorylribose-1-pyrophosphate (PRPP) to anthranilate to yield N-(5'-phosphoribosyl)-anthranilate (PRA). The chain is Anthranilate phosphoribosyltransferase from Francisella tularensis subsp. mediasiatica (strain FSC147).